Consider the following 258-residue polypeptide: Peptide methionine sulfoxide reductase A4, chloroplastic (258 aa).

The N-terminal 53 residues, M1–P53, are a transit peptide targeting the chloroplast. N-acetylmethionine is present on M54. Residues G62–S89 are disordered. A Phosphoserine modification is found at S245.

The protein belongs to the MsrA Met sulfoxide reductase family. Expressed in rosette and cauline leaves, and at lower levels in stems and flowers (at protein level).

It localises to the plastid. The protein resides in the chloroplast stroma. It carries out the reaction L-methionyl-[protein] + [thioredoxin]-disulfide + H2O = L-methionyl-(S)-S-oxide-[protein] + [thioredoxin]-dithiol. It catalyses the reaction [thioredoxin]-disulfide + L-methionine + H2O = L-methionine (S)-S-oxide + [thioredoxin]-dithiol. Functionally, catalyzes the reduction of methionine sulfoxide (MetSO) to methionine in proteins. Plays a protective role against oxidative stress by restoring activity to proteins that have been inactivated by methionine oxidation. Prevents the methionine sulfoxidation of the heat shock protein HSP21 and its subsequent inactivation. MSRA family specifically reduces the MetSO S-enantiomer. The protein is Peptide methionine sulfoxide reductase A4, chloroplastic (MSR4) of Arabidopsis thaliana (Mouse-ear cress).